We begin with the raw amino-acid sequence, 168 residues long: Endoribonuclease YbeY (168 aa).

Residues H119, H123, and H129 each contribute to the Zn(2+) site.

It belongs to the endoribonuclease YbeY family. Requires Zn(2+) as cofactor.

The protein resides in the cytoplasm. In terms of biological role, single strand-specific metallo-endoribonuclease involved in late-stage 70S ribosome quality control and in maturation of the 3' terminus of the 16S rRNA. The sequence is that of Endoribonuclease YbeY from Gluconobacter oxydans (strain 621H) (Gluconobacter suboxydans).